A 261-amino-acid chain; its full sequence is MEMO1 family protein AF_2310 (261 aa).

This sequence belongs to the MEMO1 family.

The polypeptide is MEMO1 family protein AF_2310 (Archaeoglobus fulgidus (strain ATCC 49558 / DSM 4304 / JCM 9628 / NBRC 100126 / VC-16)).